The primary structure comprises 498 residues: Glycerol kinase (498 aa).

T12 is a binding site for ADP. 3 residues coordinate ATP: T12, T13, and S14. Sn-glycerol 3-phosphate is bound at residue T12. R16 contributes to the ADP binding site. Positions 82, 83, 134, and 244 each coordinate sn-glycerol 3-phosphate. Residues R82, E83, Y134, D244, and Q245 each coordinate glycerol. Positions 266 and 310 each coordinate ADP. 4 residues coordinate ATP: T266, G310, Q314, and G411. G411 and N415 together coordinate ADP.

This sequence belongs to the FGGY kinase family.

The catalysed reaction is glycerol + ATP = sn-glycerol 3-phosphate + ADP + H(+). Its pathway is polyol metabolism; glycerol degradation via glycerol kinase pathway; sn-glycerol 3-phosphate from glycerol: step 1/1. With respect to regulation, inhibited by fructose 1,6-bisphosphate (FBP). Functionally, key enzyme in the regulation of glycerol uptake and metabolism. Catalyzes the phosphorylation of glycerol to yield sn-glycerol 3-phosphate. The sequence is that of Glycerol kinase from Chloroflexus aurantiacus (strain ATCC 29366 / DSM 635 / J-10-fl).